Reading from the N-terminus, the 184-residue chain is MSVSTLFQQNNNNIYNKSNTLTNTPSNPTGNTNTLWSNSGFNPPHLMYGASDVTAAINNIAFETGTFNLQLSGPWASPISHAVSYTKINNLVNLTIPTYQAQATTLASISSIVGALPTNLRPVNNPEIDFEIFVLDNGTRTTNPGLITLLSNGQILIYKDNNLGQFTVGSGGSGFNPFSITYMI.

Residues 14 to 35 (IYNKSNTLTNTPSNPTGNTNTL) form a disordered region.

It belongs to the sputnik virus V6 family.

It localises to the virion. The protein is Structural protein V8 of Sputnik virophage.